Reading from the N-terminus, the 266-residue chain is Ciliary microtubule inner protein 4 (266 aa).

Polar residues-rich tracts occupy residues 1–15 (MELSHRQGTTTLTRT) and 24–38 (QDMNSFRANHSSLDN). The tract at residues 1 to 124 (MELSHRQGTT…SPEQRTVPLS (124 aa)) is disordered. The segment covering 47-63 (LSQSPLGSSLGQGYLET) has biased composition (low complexity). Basic and acidic residues predominate over residues 81–102 (HPEDLKKGASRSSSRDARETFR).

In terms of tissue distribution, only detected in testis, in the spermatids and sperm within the seminiferous tubules (at protein level).

Its subcellular location is the cytoplasmic vesicle. It is found in the secretory vesicle. It localises to the acrosome. The protein resides in the cell projection. The protein localises to the cilium. Its subcellular location is the flagellum. Functionally, seems to be associated with spermiogenesis but is not essential for sperm development and male fertility. The chain is Ciliary microtubule inner protein 4 (Cimip4) from Mus musculus (Mouse).